Reading from the N-terminus, the 337-residue chain is Ketol-acid reductoisomerase (NADP(+)) (337 aa).

The region spanning 1–180 (MQVYYDKDAD…GGTKGGVIET (180 aa)) is the KARI N-terminal Rossmann domain. Residues 24–27 (YGSQ), Arg47, and Ser51 each bind NADP(+). His106 is a catalytic residue. Gly132 is a binding site for NADP(+). The KARI C-terminal knotted domain maps to 181–326 (TFREETETDL…AQLRAMMPWI (146 aa)). Asp189, Glu193, Glu225, and Glu229 together coordinate Mg(2+). Ser250 provides a ligand contact to substrate.

The protein belongs to the ketol-acid reductoisomerase family. Mg(2+) serves as cofactor.

The enzyme catalyses (2R)-2,3-dihydroxy-3-methylbutanoate + NADP(+) = (2S)-2-acetolactate + NADPH + H(+). The catalysed reaction is (2R,3R)-2,3-dihydroxy-3-methylpentanoate + NADP(+) = (S)-2-ethyl-2-hydroxy-3-oxobutanoate + NADPH + H(+). It functions in the pathway amino-acid biosynthesis; L-isoleucine biosynthesis; L-isoleucine from 2-oxobutanoate: step 2/4. Its pathway is amino-acid biosynthesis; L-valine biosynthesis; L-valine from pyruvate: step 2/4. In terms of biological role, involved in the biosynthesis of branched-chain amino acids (BCAA). Catalyzes an alkyl-migration followed by a ketol-acid reduction of (S)-2-acetolactate (S2AL) to yield (R)-2,3-dihydroxy-isovalerate. In the isomerase reaction, S2AL is rearranged via a Mg-dependent methyl migration to produce 3-hydroxy-3-methyl-2-ketobutyrate (HMKB). In the reductase reaction, this 2-ketoacid undergoes a metal-dependent reduction by NADPH to yield (R)-2,3-dihydroxy-isovalerate. This Neisseria meningitidis serogroup A / serotype 4A (strain DSM 15465 / Z2491) protein is Ketol-acid reductoisomerase (NADP(+)).